Here is a 160-residue protein sequence, read N- to C-terminus: Large ribosomal subunit protein bL17 (160 aa).

The tract at residues 128 to 160 is disordered; it reads KKATKTRRSRKRKSADVVVEAAPAEETPKAAEE. The span at 129–140 shows a compositional bias: basic residues; that stretch reads KATKTRRSRKRK.

This sequence belongs to the bacterial ribosomal protein bL17 family. As to quaternary structure, part of the 50S ribosomal subunit. Contacts protein L32.

This chain is Large ribosomal subunit protein bL17, found in Porphyromonas gingivalis (strain ATCC 33277 / DSM 20709 / CIP 103683 / JCM 12257 / NCTC 11834 / 2561).